The following is a 974-amino-acid chain: Villin-4 (974 aa).

6 Gelsolin-like repeats span residues 29 to 79 (FIPT…DEAG), 150 to 190 (VHVK…QERA), 262 to 305 (GQAN…DDRK), 394 to 451 (LQVW…EERG), 532 to 572 (MQAI…TDQE), and 634 to 675 (LKVT…KNKL). Residues 738 to 783 (VKNGGTPVADKPKRRTPASYGGRASVPDKSQQRSRSMSFSPDRVRV) form a disordered region. Residues serine 777 and serine 787 each carry the phosphoserine modification. Disordered stretches follow at residues 801–833 (NARN…APKS) and 845–930 (KIPP…PVSD). Over residues 824–833 (SSKFAPAPKS) the composition is skewed to low complexity. The segment covering 872–887 (NSKEQEEKKENDKEEG) has biased composition (basic and acidic residues). Residues 888 to 898 (SMSSRIESLTI) show a composition bias toward polar residues. Serine 890 is modified (phosphoserine). The 66-residue stretch at 909 to 974 (EEDLPAHPYD…NKFKMAVQLF (66 aa)) folds into the HP domain. Basic and acidic residues predominate over residues 912–921 (LPAHPYDRLK).

Belongs to the villin/gelsolin family. As to expression, preferentially expressed in vegetative tissues. Detected in the whole seedling, hypocotyl, cotyledon, primary root, roots hair cells and trichomes. Expressed in flowers but not in the silique.

It is found in the cytoplasm. The protein localises to the cytoskeleton. In terms of biological role, binds actin and actin filament bundles in a Ca(2+)-insensitive manner, but caps the barbed end of actin filaments and is able to sever them in a calcium-dependent manner. Involved in root hair growth through regulating actin organization in a Ca(2+)-dependent manner. This is Villin-4 from Arabidopsis thaliana (Mouse-ear cress).